A 1671-amino-acid polypeptide reads, in one-letter code: Hybrid signal transduction protein dokA (1671 aa).

Residues Met-1 to Ser-10 show a composition bias toward basic and acidic residues. Disordered stretches follow at residues Met-1–Gly-27, Asp-42–Asp-89, Gln-126–Ser-241, Tyr-365–Glu-451, His-579–Ile-603, and Ser-629–Ala-651. A compositionally biased stretch (polar residues) spans Gln-11–Gly-27. Composition is skewed to low complexity over residues Asn-45–Asn-83 and Gln-126–Glu-167. Residues Gln-168–Glu-179 show a composition bias toward acidic residues. Over residues Asn-367–Asn-449 the composition is skewed to low complexity. A compositionally biased stretch (polar residues) spans Thr-591–Ser-600. One can recognise a Histidine kinase domain in the interval Asn-1050–Ile-1276. The 115-residue stretch at Tyr-1519–Ile-1633 folds into the Response regulatory domain.

Under osmotic stress conditions, this protein undergoes phosphorylation at a serine residue in the kinase core, which is not due to an autophosphorylation of dokA. This is in contrast to the classic two-component paradigm, which predicts only histidine and aspartate phosphorylation.

Part of the osmoregulatory pathway which leads to the increase of intracellular cAMP concentration in response to hyperosmotic stress. Thought to negatively regulate the rdeA-regA pathway by acting as a phosphatase towards the HPt protein rdeA. Has probably no histidine kinase activity. The sequence is that of Hybrid signal transduction protein dokA (dokA) from Dictyostelium discoideum (Social amoeba).